We begin with the raw amino-acid sequence, 445 residues long: MGESIPLAAPVPVEQAVLETFFSHLGIFSYDKAKDNVEKEREANKSAGGSWLSLLAALAHLAAAEKVYHSLTYLGQKLGGQSFFSRKDSIRTIYTSLHNELKKVVAGRGAPGGTAPHVEELLPHLSEQLCFFVQARMEIADFYEKMYALSTQKFINTEELVSTLDTILRKYSSRFHHPILSPLESSFQLEVGVLSHLLKAQAQISEWKFLPSLVTLHNAHTKLQSWGQTFEKQRETKKHLFGGQSQKAVQPPHLFLWLMKLKTMLLAKFSFYFHEALSRQTTASEMKALTAKANPDLFGKISSFIRKYDAANVSLIFDNRGSESFQGHGYHHPHSYREAPKGVDQYPAVVSLPSDRPVMHWPNVIMIMTDRASDLNSLEKVVHFYDDKVQSTYFLTRPEPHFTIVVIFESKKSERDSHFISFLNELSLALKNPKVFASLKPGSKG.

Belongs to the KICS2 family. In terms of assembly, part of the KICSTOR complex composed of KPTN, ITFG2, KICS2 and SZT2. SZT2 probably serves as a link between the other three proteins in the KICSTOR complex and may mediate the direct interaction with the GATOR complex via GATOR1. The KICSTOR complex interacts directly with the GATOR1 complex and most probably indirectly with the GATOR2 complex in an amino acid-independent manner.

Its subcellular location is the lysosome membrane. Its function is as follows. As part of the KICSTOR complex functions in the amino acid-sensing branch of the TORC1 signaling pathway. Recruits, in an amino acid-independent manner, the GATOR1 complex to the lysosomal membranes and allows its interaction with GATOR2 and the RAG GTPases. Functions upstream of the RAG GTPases and is required to negatively regulate mTORC1 signaling in absence of amino acids. In absence of the KICSTOR complex mTORC1 is constitutively localized to the lysosome and activated. The KICSTOR complex is also probably involved in the regulation of mTORC1 by glucose. This chain is KICSTOR subunit 2, found in Mus musculus (Mouse).